The chain runs to 334 residues: N-acetyl-gamma-glutamyl-phosphate reductase (334 aa).

Cysteine 154 is an active-site residue.

This sequence belongs to the NAGSA dehydrogenase family. Type 1 subfamily.

The protein resides in the cytoplasm. The catalysed reaction is N-acetyl-L-glutamate 5-semialdehyde + phosphate + NADP(+) = N-acetyl-L-glutamyl 5-phosphate + NADPH + H(+). It functions in the pathway amino-acid biosynthesis; L-arginine biosynthesis; N(2)-acetyl-L-ornithine from L-glutamate: step 3/4. Its function is as follows. Catalyzes the NADPH-dependent reduction of N-acetyl-5-glutamyl phosphate to yield N-acetyl-L-glutamate 5-semialdehyde. In Aliivibrio fischeri (strain ATCC 700601 / ES114) (Vibrio fischeri), this protein is N-acetyl-gamma-glutamyl-phosphate reductase.